Here is a 319-residue protein sequence, read N- to C-terminus: Porphobilinogen deaminase 1 (319 aa).

S-(dipyrrolylmethanemethyl)cysteine is present on C244.

This sequence belongs to the HMBS family. As to quaternary structure, monomer. The cofactor is dipyrromethane.

It catalyses the reaction 4 porphobilinogen + H2O = hydroxymethylbilane + 4 NH4(+). It functions in the pathway porphyrin-containing compound metabolism; protoporphyrin-IX biosynthesis; coproporphyrinogen-III from 5-aminolevulinate: step 2/4. Its function is as follows. Tetrapolymerization of the monopyrrole PBG into the hydroxymethylbilane pre-uroporphyrinogen in several discrete steps. This Streptomyces coelicolor (strain ATCC BAA-471 / A3(2) / M145) protein is Porphobilinogen deaminase 1 (hemC1).